Here is a 277-residue protein sequence, read N- to C-terminus: Putative phosphoenolpyruvate synthase regulatory protein (277 aa).

157 to 164 serves as a coordination point for ADP; it reads GVSRCGKT.

It belongs to the pyruvate, phosphate/water dikinase regulatory protein family. PSRP subfamily.

It catalyses the reaction [pyruvate, water dikinase] + ADP = [pyruvate, water dikinase]-phosphate + AMP + H(+). It carries out the reaction [pyruvate, water dikinase]-phosphate + phosphate + H(+) = [pyruvate, water dikinase] + diphosphate. Functionally, bifunctional serine/threonine kinase and phosphorylase involved in the regulation of the phosphoenolpyruvate synthase (PEPS) by catalyzing its phosphorylation/dephosphorylation. In Citrobacter koseri (strain ATCC BAA-895 / CDC 4225-83 / SGSC4696), this protein is Putative phosphoenolpyruvate synthase regulatory protein.